Here is a 455-residue protein sequence, read N- to C-terminus: UDP-glycosyltransferase 2 (455 aa).

The protein belongs to the UDP-glycosyltransferase family.

The catalysed reaction is exophillate + UDP-alpha-D-galactose = phaeomoniecin D + UDP + H(+). It functions in the pathway secondary metabolite biosynthesis. Functionally, catalyzes the second glycosylation step during phaeomoniecin D biosynthesis, the further O-galactosylation of exophillic acid (produced by the O-glycosyltransferase OGT1) to yield the 4-O-beta-D-galactoside phaeomoniecin D. The protein is UDP-glycosyltransferase 2 of Phaeomoniella chlamydospora (Phaeoacremonium chlamydosporum).